We begin with the raw amino-acid sequence, 953 residues long: TPR repeat-containing protein ZIP4 (953 aa).

A TPR 1 repeat occupies 129–162 (ASFFHRSGLAWLDLGRVDLASACFEKATPLVSAA). The interval 248–269 (AASPSSSSPRTPPYGGATPKTP) is disordered. TPR repeat units lie at residues 432-465 (HALL…VSRD) and 473-506 (ADCF…EPNI). The segment at 925–953 (VSGDEPDECSQEEAPKASISGSMSQPVLV) is disordered. The segment covering 943 to 953 (ISGSMSQPVLV) has biased composition (polar residues).

Interacts with HEI10 and SHOC1.

Its subcellular location is the nucleus. It is found in the chromosome. Required for crossover formation, complete synapsis of homologous chromosomes and bivalent formation during meiosis. Is specific to recombination events resulting in interference-sensitive crossovers (class I meiotic crossover) and works cooperatively with MER3 to promote crossovers. The sequence is that of TPR repeat-containing protein ZIP4 from Oryza sativa subsp. japonica (Rice).